Reading from the N-terminus, the 382-residue chain is Galactokinase (382 aa).

34–37 (EHTD) provides a ligand contact to substrate. 124–130 (GAGLSSS) is an ATP binding site. The Mg(2+) site is built by serine 130 and glutamate 162. The Proton acceptor role is filled by aspartate 174. Tyrosine 223 contacts substrate.

This sequence belongs to the GHMP kinase family. GalK subfamily.

It is found in the cytoplasm. It carries out the reaction alpha-D-galactose + ATP = alpha-D-galactose 1-phosphate + ADP + H(+). Its pathway is carbohydrate metabolism; galactose metabolism. Its function is as follows. Catalyzes the transfer of the gamma-phosphate of ATP to D-galactose to form alpha-D-galactose-1-phosphate (Gal-1-P). This is Galactokinase from Salmonella paratyphi B (strain ATCC BAA-1250 / SPB7).